The chain runs to 94 residues: Co-chaperonin GroES (94 aa).

Belongs to the GroES chaperonin family. Heptamer of 7 subunits arranged in a ring. Interacts with the chaperonin GroEL.

It is found in the cytoplasm. Its function is as follows. Together with the chaperonin GroEL, plays an essential role in assisting protein folding. The GroEL-GroES system forms a nano-cage that allows encapsulation of the non-native substrate proteins and provides a physical environment optimized to promote and accelerate protein folding. GroES binds to the apical surface of the GroEL ring, thereby capping the opening of the GroEL channel. The polypeptide is Co-chaperonin GroES (Anoxybacillus flavithermus (strain DSM 21510 / WK1)).